Reading from the N-terminus, the 356-residue chain is 4-hydroxy-3-methylbut-2-en-1-yl diphosphate synthase (flavodoxin) (356 aa).

The [4Fe-4S] cluster site is built by Cys-262, Cys-265, Cys-297, and Glu-304.

This sequence belongs to the IspG family. It depends on [4Fe-4S] cluster as a cofactor.

The enzyme catalyses (2E)-4-hydroxy-3-methylbut-2-enyl diphosphate + oxidized [flavodoxin] + H2O + 2 H(+) = 2-C-methyl-D-erythritol 2,4-cyclic diphosphate + reduced [flavodoxin]. It participates in isoprenoid biosynthesis; isopentenyl diphosphate biosynthesis via DXP pathway; isopentenyl diphosphate from 1-deoxy-D-xylulose 5-phosphate: step 5/6. In terms of biological role, converts 2C-methyl-D-erythritol 2,4-cyclodiphosphate (ME-2,4cPP) into 1-hydroxy-2-methyl-2-(E)-butenyl 4-diphosphate. This chain is 4-hydroxy-3-methylbut-2-en-1-yl diphosphate synthase (flavodoxin), found in Campylobacter fetus subsp. fetus (strain 82-40).